The chain runs to 324 residues: Probable UDP-sugar transporter protein SLC35A4 (324 aa).

At 1 to 18 (MSVEDGGVPGLGRPRKAR) the chain is on the cytoplasmic side. A helical transmembrane segment spans residues 19 to 39 (WTLMLLLSTAMYGAHAPLLAL). The Lumenal portion of the chain corresponds to 40–52 (CHVDGRVPFRPSS). A helical transmembrane segment spans residues 53–73 (AVLLTELTKLLLCALSLLVGW). The Cytoplasmic segment spans residues 74-85 (QAWPQGTPPWRQ). The chain crosses the membrane as a helical span at residues 86–106 (AAPFALSALLYGANNNLVIYL). Over 107-141 (QRYMDPSTYQVLSNLKIGSTALFYCLCLRHRLSAR) the chain is Lumenal. A helical membrane pass occupies residues 142–162 (QGLALLLLMAAGACYAAGGLQ). Over 163 to 180 (DPGTTLPGPPSAAATSPM) the chain is Cytoplasmic. The chain crosses the membrane as a helical span at residues 181–201 (PLHITPLGLLLLILYCLISGL). Residues 202–214 (SSVYTELLMKRQR) are Lumenal-facing. Residues 215-235 (LPLALQNLFLYSFGVLLNLGL) traverse the membrane as a helical segment. Residues 236-248 (HAGGGPGPGLLEG) lie on the Cytoplasmic side of the membrane. Residues 249 to 271 (FSGWMALVVLSQALNGLLMSAVM) traverse the membrane as a helical segment. Over 272 to 275 (KHGS) the chain is Lumenal. Residues 276–298 (SITRLFVVSCSLVVNAVLSAALL) form a helical membrane-spanning segment. Residues 299–324 (RLQLTAAFFLATLLIGLAVRLYYGSR) are Cytoplasmic-facing.

The protein belongs to the nucleotide-sugar transporter family. SLC35A subfamily. In terms of assembly, found in a complex with SLC35A2 and SLC35A3.

The protein localises to the golgi apparatus membrane. The enzyme catalyses CDP-L-ribitol(in) + CDP(out) = CDP-L-ribitol(out) + CDP(in). In terms of biological role, mediates the transport of CDP-ribitol. Does not exhibit CMP-sialic acid, UDP-galactose and UDP-N-acetylglucosamine transport activity. The protein is Probable UDP-sugar transporter protein SLC35A4 of Bos taurus (Bovine).